The primary structure comprises 735 residues: Delta-1-pyrroline-5-carboxylate synthase 2 (735 aa).

The segment at 1–315 is glutamate 5-kinase; sequence MGRGGIGGAG…WGCSKEATAR (315 aa). Residues serine 79, aspartate 176, and asparagine 195 each coordinate substrate. ATP contacts are provided by residues 215–216, 221–226, and 255–261; these read SD, YSGPPS, and RGGMQAK. Residues 316 to 735 are gamma-glutamyl phosphate reductase; that stretch reads EMAVAARDCS…VYTHRELPLQ (420 aa).

In the N-terminal section; belongs to the glutamate 5-kinase family. It in the C-terminal section; belongs to the gamma-glutamyl phosphate reductase family.

The enzyme catalyses L-glutamate + ATP = L-glutamyl 5-phosphate + ADP. It catalyses the reaction L-glutamate 5-semialdehyde + phosphate + NADP(+) = L-glutamyl 5-phosphate + NADPH + H(+). The protein operates within amino-acid biosynthesis; L-proline biosynthesis; L-glutamate 5-semialdehyde from L-glutamate: step 1/2. It functions in the pathway amino-acid biosynthesis; L-proline biosynthesis; L-glutamate 5-semialdehyde from L-glutamate: step 2/2. Its activity is regulated as follows. Feedback regulated by proline. Its function is as follows. P5CS plays a key role in proline biosynthesis, leading to osmoregulation in plants. Involved in abiotic stress tolerance. This is Delta-1-pyrroline-5-carboxylate synthase 2 from Oryza sativa subsp. japonica (Rice).